The following is a 379-amino-acid chain: MFSNRLPPPKHSQGRVSTALSSDRVEPAILTDQIAKNVKLDDFIPKRQSNFELSVPLPTKAEIQECTARTKSYIQRLVNAKLANSNNRASSRYVTETHQAPANLLLNNSHHIEVVSKQMDPLLPRFVGKKARKVVAPTENDEVVPVLHMDGSNDRGEADPNEWKIPAAVSNWKNPNGYTVALERRVGKALDNENNTINDGFMKLSEALENADKKARQEIRSKMELKRLAMEQEMLAKESKLKELSQRARYHNGTPQTGAIVKPKKQTSTVARLKELAYSQGRDVSEKIILGAAKRSEQPDLQYDSRFFTRGANASAKRHEDQVYDNPLFVQQDIESIYKTNYEKLDEAVNVKSEGASGSHGPIQFTKAESDDKSDNYGA.

Residues methionine 1 to lysine 10 show a composition bias toward pro residues. Disordered stretches follow at residues methionine 1 to serine 22 and serine 353 to alanine 379. Residues alanine 368 to alanine 379 are compositionally biased toward basic and acidic residues.

Belongs to the SNW family. In terms of assembly, belongs to the CWC complex (or CEF1-associated complex), a spliceosome sub-complex reminiscent of a late-stage spliceosome composed of the U2, U5 and U6 snRNAs and at least BUD13, BUD31, BRR2, CDC40, CEF1, CLF1, CUS1, CWC2, CWC15, CWC21, CWC22, CWC23, CWC24, CWC25, CWC27, ECM2, HSH155, IST3, ISY1, LEA1, MSL1, NTC20, PRP8, PRP9, PRP11, PRP19, PRP21, PRP22, PRP45, PRP46, SLU7, SMB1, SMD1, SMD2, SMD3, SMX2, SMX3, SNT309, SNU114, SPP2, SYF1, SYF2, RSE1 and YJU2. Interacts with CLF1, PRP22 and PRP46. Interacts with SPP382.

It is found in the nucleus. Its function is as follows. Involved in pre-mRNA splicing. Associated with the spliceosome throughout the splicing reactions, until after the second catalytic step. This is Pre-mRNA-processing protein 45 (PRP45) from Saccharomyces cerevisiae (strain ATCC 204508 / S288c) (Baker's yeast).